We begin with the raw amino-acid sequence, 734 residues long: DNA-binding protein RFX2 (734 aa).

Residues 1–23 are compositionally biased toward polar residues; the sequence is MQRSEGGSETPSTVALRTSTSAQ. Residues 1 to 31 are disordered; that stretch reads MQRSEGGSETPSTVALRTSTSAQAPVVQPVP. The RFX-type winged-helix DNA-binding region spans 204–279; that stretch reads HLQWLLDNYE…YHYYGIRLKP (76 aa). Residues 694–722 form a disordered region; the sequence is DTSFSDDMTSDGDMSRMSERSLTEPAVKR. The span at 706–722 shows a compositional bias: basic and acidic residues; it reads DMSRMSERSLTEPAVKR.

The protein belongs to the RFX family. Homodimer. Heterodimer; heterodimerizes with other rfx proteins.

Its subcellular location is the nucleus. The protein localises to the cytoplasm. Transcription factor that acts as a key regulator of ciliogenesis. Specifically regulates expression of genes required for cilium assembly and function. Recognizes and binds the X-box, a regulatory motif with DNA sequence 5'-GTNRCC(0-3N)RGYAAC-3' present on promoters. This Danio rerio (Zebrafish) protein is DNA-binding protein RFX2 (rfx2).